The chain runs to 1927 residues: MNRILTLFILFISLFIVCEATHFRFGTMSWMPMGSHNTIKFSSNYAFRIGFFKKFNKGCNVGDVVKVGDLDLGDDKTKVDVNLVVTSVNQADDWFTGEFSYTHTYNPIKLGGKAVTYKVVFTDCCRIKSLLNNAEGSWYISTSVVVDPNQGSDVSTFNRSPVSGMVPIITLNRDKNNQFLIAASDPNGDTLTYSLSNAYTMNQPSGLSIDSSKGIVSFKPTVSGFYSTQIMIKDTKGAYVVVDFLINSVIEPGVCHPSCSNGGNTCNGNSGCKSCKGTDSNGNTCSSFPPVFVYPPTPTDGSLLAYEVNKTNSFSIQCKTEEKSKTVFIQPANIPLAATLTSSDQNKQVSTLTYSMLPQLKHIGVYVISAYCTDNKGLVSTITSFSISVEKPICGHGTNKPGGGCNCETGWDPEKNCYECLKGHYGEKCDPVDPCVNGESNEGSQGNGKCTCYYGWEGKNCDIKVNQVCNANKENVVLDSSVAKSSYINPNFAQVYLNTDPSKQALTLSSKLSIPETIDKFEVLVLVDSQPSIVEYWDNFKKYSSDLTKNLQDISETVSIGLGLFSDAKTNGYSFVLKKSIGNGLSGLDDKDKAPASSYSTKNSLIALTSAAEFPAGWSTGSIKIIVLLTDNDYSATAQEVSKFTSTLISKSILPVVVSFNDNQNWDTLFKNQGFGSTKKTSNAKGNDWVSVATSAIKDVLSKAVVKAIDDTKGFLTLPSATTISIEDSKDYTIPIQIKYPQGQSDIPQNPSVSYSVVGFGITRIVINYNSAPTALGYSIETKQNVNYNFKLSGSDVDGNTLTIKFKTIPAASVGVIQADGVTIEQGDSFSIEKTFTFKPATNYYTKSTNDKFTFVANDGCLDSNEATVEIKITHVNQAPSCSSLSGSAISVTGLNTPKSFSLQGSDIETDSNLKIVFGDLTAISAYGNIKSGSNVVSTGSSVQLSSGSASLTFTQTKDIANDKEITVDFKVNDGSLDSSSSCSFKVKFVHFNKPPVAFAVTPLTIRQNSELKITISASDSDSDSVIFTLDDLKLGGGDSFFKCDDRSQLTAPFTTQPVSISGGVASFSEICYSSPLVNANSYASLVFFANDGQLSSDKFKVLININGDRPNAPPVVNQIPNFTMNEDDISNELVIDGIDPDELDQGKLKGIIIQKPTNGVILVKSGSSTSEAPIIGNAPYKIFYKPNPLYYGTDSFSYTVEDSMGERDATPKTTQITVQHVNHAPTLSIDPYDFTSQTSEKTLELTPKDIDLIDTVFHCTIVKLPATAIIKTSAGKVIDTVPTDLSDNKYIITSNNNIYNDFSDSFDAKCYDSSNAVSNIATGPITFRYINVPPKAESSDETLNQDSSVSFSVKATDLEDNSNVRAVIRSLPAKGTLTIKSTGKAAEISSTYAIDDFVYTPVAGYSNWDKPGHVGPADSFNFVAKDSKNDISSNIGTVSFFIEPRNPPTYEGLAVLYTKENTDLPFSISGIVGNGGSNVFLRIKSIVSRGSLYATHCMGTEGCMSEPNPVDININFTSQPYTFSFTPIEYENGDNYAIIEFVLYDKFNGQEVESQKYTIIINVIPVNQAPEVILIEHTLSTLPNNVIAFDKFKTVKMETNSYVIIKYDGTDIDDPKEKLKSYIVSPPLRGLLYVYDKDAKDGLGKLIKKDDTFVPVAQDGFWYIVFVPTPGSSGDGYVRIPISMVDFLGDISVPVTVAVDVSKKNIPPFITIENKNYTSLANTSIVVTGVSFDDPDSKYNDVELILSLVNKDGDLVSNKIATFSLSQQSKAKCTKHSEFAQFTCRSNKKTLNALISTMYVNHQGGGSYRLKVFVNDLGYSSPASIRDKNHMTATDYVELDVTKPEVTTTKENNNKTVLTGAIAGAAAGAGLLAAGAWFLLKKSAPPTDAFFGEGAFADGAVSTNPMYEESGRSAINPLYEASSENL.

The first 20 residues, 1 to 20 (MNRILTLFILFISLFIVCEA), serve as a signal peptide directing secretion. At 21 to 1860 (THFRFGTMSW…KENNNKTVLT (1840 aa)) the chain is on the extracellular side. N309 is a glycosylation site (N-linked (GlcNAc...) asparagine). The region spanning 425–462 (YGEKCDPVDPCVNGESNEGSQGNGKCTCYYGWEGKNCD) is the EGF-like domain. Cystine bridges form between C435/C450 and C452/C461. Residues 522–709 (EVLVLVDSQP…VLSKAVVKAI (188 aa)) enclose the VWFA domain. N-linked (GlcNAc...) asparagine glycans are attached at residues N1122, N1516, N1717, N1723, and N1855. Residues 1861–1881 (GAIAGAAAGAGLLAAGAWFLL) traverse the membrane as a helical segment. Over 1882 to 1927 (KKSAPPTDAFFGEGAFADGAVSTNPMYEESGRSAINPLYEASSENL) the chain is Cytoplasmic.

Belongs to the SIB family. Interacts with talA/talin.

It is found in the membrane. Functionally, implicated in cellular adhesion to substrate or phagocytic particles. The sequence is that of Integrin beta-like protein A (sibA) from Dictyostelium discoideum (Social amoeba).